The following is a 316-amino-acid chain: Ribosomal RNA small subunit methyltransferase H (316 aa).

S-adenosyl-L-methionine-binding positions include 35–37, aspartate 55, tyrosine 79, aspartate 100, and glutamine 107; that span reads GGH.

The protein belongs to the methyltransferase superfamily. RsmH family.

It is found in the cytoplasm. It carries out the reaction cytidine(1402) in 16S rRNA + S-adenosyl-L-methionine = N(4)-methylcytidine(1402) in 16S rRNA + S-adenosyl-L-homocysteine + H(+). Its function is as follows. Specifically methylates the N4 position of cytidine in position 1402 (C1402) of 16S rRNA. In Nitrosospira multiformis (strain ATCC 25196 / NCIMB 11849 / C 71), this protein is Ribosomal RNA small subunit methyltransferase H.